An 838-amino-acid polypeptide reads, in one-letter code: V-type proton ATPase 116 kDa subunit a 1 (838 aa).

At methionine 1–glutamate 388 the chain is on the cytoplasmic side. Residues threonine 250 and threonine 360 each carry the phosphothreonine modification. At tyrosine 364 the chain carries Phosphotyrosine. Residues isoleucine 389 to phenylalanine 407 traverse the membrane as a helical segment. Residues glycine 408 to aspartate 409 lie on the Vacuolar side of the membrane. A helical transmembrane segment spans residues leucine 410–lysine 426. Residues glutamate 427–serine 441 are Cytoplasmic-facing. A helical membrane pass occupies residues threonine 442 to serine 471. Residues leucine 472–serine 535 lie on the Vacuolar side of the membrane. The helical transmembrane segment at phenylalanine 536–leucine 555 threads the bilayer. The Cytoplasmic segment spans residues serine 556–phenylalanine 573. The chain crosses the membrane as a helical span at residues isoleucine 574 to lysine 594. Over tryptophan 595–phenylalanine 639 the chain is Vacuolar. A helical transmembrane segment spans residues leucine 640–leucine 659. Residues arginine 660–threonine 725 lie on the Cytoplasmic side of the membrane. The chain crosses the membrane as a helical span at residues isoleucine 726–alanine 750. Over glutamine 751 to alanine 771 the chain is Vacuolar. A helical transmembrane segment spans residues glycine 772–glutamate 810. Residues phenylalanine 811 to aspartate 838 lie on the Cytoplasmic side of the membrane.

This sequence belongs to the V-ATPase 116 kDa subunit family. V-ATPase is a heteromultimeric enzyme made up of two complexes: the ATP-hydrolytic V1 complex and the proton translocation V0 complex. The V1 complex consists of three catalytic AB heterodimers that form a heterohexamer, three peripheral stalks each consisting of EG heterodimers, one central rotor including subunits D and F, and the regulatory subunits C and H. The proton translocation complex V0 consists of the proton transport subunit a, a ring of proteolipid subunits c9c'', rotary subunit d, subunits e and f, and the accessory subunits ATP6AP1/Ac45 and ATP6AP2/PRR. Interacts with SPAAR. Expressed in brain (at protein level). In terms of tissue distribution, expressed heart, kidney, liver, spleen, and to a lesser extent in brain.

Its subcellular location is the cytoplasmic vesicle. It localises to the clathrin-coated vesicle membrane. The protein resides in the secretory vesicle. It is found in the synaptic vesicle membrane. The protein localises to the melanosome. Functionally, subunit of the V0 complex of vacuolar(H+)-ATPase (V-ATPase), a multisubunit enzyme composed of a peripheral complex (V1) that hydrolyzes ATP and a membrane integral complex (V0) that translocates protons. V-ATPase is responsible for the acidification of various organelles, such as lysosomes, endosomes, the trans-Golgi network, and secretory granules, including synaptic vesicles. In certain cell types, can be exported to the plasma membrane, where it is involved in the acidification of the extracellular environment. Required for assembly and activity of the vacuolar ATPase. Through its action on compartment acidification, plays an essential role in neuronal development in terms of integrity and connectivity of neurons. The protein is V-type proton ATPase 116 kDa subunit a 1 (ATP6V0A1) of Bos taurus (Bovine).